The sequence spans 463 residues: Asparagine--tRNA ligase (463 aa).

Belongs to the class-II aminoacyl-tRNA synthetase family. As to quaternary structure, homodimer.

It localises to the cytoplasm. The catalysed reaction is tRNA(Asn) + L-asparagine + ATP = L-asparaginyl-tRNA(Asn) + AMP + diphosphate + H(+). This is Asparagine--tRNA ligase from Bacillus cereus (strain ATCC 10987 / NRS 248).